Consider the following 524-residue polypeptide: G1/S-specific cyclin-E (524 aa).

The segment at 1–155 (MAGRKSSRTA…EESHEMVRLE (155 aa)) is disordered. The segment covering 18 to 47 (KPERKSAILSPHDELRERLLETAIDMKENI) has biased composition (basic and acidic residues). Over residues 48-62 (PQRNTRNSSVGSQKS) the composition is skewed to polar residues. Basic and acidic residues-rich tracts occupy residues 63 to 78 (DCSETRKRRSTKEGPA), 86 to 95 (KHRNGSREDS), and 146 to 155 (EESHEMVRLE).

Belongs to the cyclin family. Cyclin E subfamily. Interacts with a member of the CDK2/CDK protein kinases to form a serine/threonine kinase holoenzyme complex. The cyclin subunit imparts substrate specificity to the complex. In terms of tissue distribution, expressed dynamically in proliferating cells throughout development. Detectable in larval blast cells undergoing active proliferation that give rise to all tissue types, including germline, intestine, hypodermis, neurons, and muscle.

The protein resides in the nucleus. It is found in the cytoplasm. Its subcellular location is the cytoskeleton. The protein localises to the microtubule organizing center. It localises to the centrosome. The protein resides in the centriole. Its function is as follows. Essential for the control of the cell cycle at the G1/S (start) transition. In association with cdk-2, regulates proliferation, quiescent state and cell fate during the development of several cell lineages. In the embryo, initiates the establishment of cell polarity through the recruitment of the centrosomal proteins spd-2 and spd-5 during prophase. During the development of the vulva, controls the onset of vulval cell terminal differentiation by controlling the duration of G1 phase. During hypoderm development at early larval stages, controls syncytial fate of seam cell daughter cells. Involved in the progression of cell division in the intestinal lineage in larvae, and in particular in endoreplication, a specific growth pathway in the intestinal epithelium, required for feeding and gut development in growing larvae. By controlling the activity of translational repressor gld-1, regulates the pool of germline stem cells and the size of the mitotic zone by preventing entry into meiosis. In addition, repression of expression by gld-1 prevents mitosis re-entry in meiotic germline cells. In Caenorhabditis elegans, this protein is G1/S-specific cyclin-E.